Consider the following 274-residue polypeptide: Undecaprenyl-diphosphatase (274 aa).

7 helical membrane-spanning segments follow: residues 21–39, 44–64, 85–105, 109–129, 185–205, 214–234, and 247–267; these read FLPI…LLGF, AQVF…LVYW, FNLA…GKAI, LFTP…ILWA, ATDF…VYSL, VADL…AWLC, and FVPF…TAST.

It belongs to the UppP family.

The protein resides in the cell inner membrane. It catalyses the reaction di-trans,octa-cis-undecaprenyl diphosphate + H2O = di-trans,octa-cis-undecaprenyl phosphate + phosphate + H(+). In terms of biological role, catalyzes the dephosphorylation of undecaprenyl diphosphate (UPP). Confers resistance to bacitracin. In Verminephrobacter eiseniae (strain EF01-2), this protein is Undecaprenyl-diphosphatase.